A 236-amino-acid chain; its full sequence is UPF0502 protein Bxeno_B1639 (236 aa).

Belongs to the UPF0502 family.

In Paraburkholderia xenovorans (strain LB400), this protein is UPF0502 protein Bxeno_B1639.